Consider the following 391-residue polypeptide: Homocysteine-responsive endoplasmic reticulum-resident ubiquitin-like domain member 1 protein (391 aa).

Methionine 1 is subject to N-acetylmethionine. At 1-263 (MESETEPEPV…VEEDDEINRD (263 aa)) the chain is on the cytoplasmic side. A Ubiquitin-like domain is found at 10 to 72 (VTLLVKSPNQ…LLDHQCLRDL (63 aa)). Positions 100 to 126 (KVAESTEEPAGSNRGQYPEDSSSDGLR) are disordered. The segment covering 112–124 (NRGQYPEDSSSDG) has biased composition (polar residues). The tract at residues 115-200 (QYPEDSSSDG…ASGAFVPPPS (86 aa)) is interaction with UBQLN1. Serine 135 is subject to Phosphoserine. Residues 264-284 (WLDWTYSAATFSVFLSILYFY) traverse the membrane as a helical segment. The Lumenal segment spans residues 285–289 (SSLSR). Residues 290-310 (FLMVMGATVVMYLHHVGWFPF) form a helical membrane-spanning segment. The Cytoplasmic segment spans residues 311 to 391 (RPRPVQNFPN…LPEGPPAIAN (81 aa)). The disordered stretch occupies residues 318 to 359 (FPNDGPPPDIVNQDPNNNLQEGTDPETEDPNHVPPDRGVLDG). Residues 346 to 357 (DPNHVPPDRGVL) show a composition bias toward basic and acidic residues.

Interacts with PSEN1 and PSEN2. Interacts with UBXN6. Interacts with UBQLN1, UBQLN2 and UBQLN4. Component of the HRD1 complex, which comprises at least SYNV1/HRD1, FAM8A1, HERPUD1/HERP, OS9, SEL1L and UBE2J1. FAM8A1 binding to SYNV1 may promote recruitment of HERPUD1 to the HRD1 complex.

The protein resides in the endoplasmic reticulum membrane. Functionally, component of the endoplasmic reticulum quality control (ERQC) system also called ER-associated degradation (ERAD) involved in ubiquitin-dependent degradation of misfolded endoplasmic reticulum proteins. Binds to ubiquilins and this interaction is required for efficient degradation of CD3D via the ERAD pathway. This chain is Homocysteine-responsive endoplasmic reticulum-resident ubiquitin-like domain member 1 protein (HERPUD1), found in Pongo abelii (Sumatran orangutan).